Here is a 399-residue protein sequence, read N- to C-terminus: Sister chromatid cohesion protein DCC1 (399 aa).

The protein belongs to the DCC1 family. As to quaternary structure, component of the CTF18-RFC complex which consists of CTF8, CTF18, DSCC1 and the RFC complex. Interacts with CTF8 and CTF18. Interacts with DDX11.

The protein resides in the nucleus. Functionally, loads PCNA onto primed templates regulating velocity, spacing and restart activity of replication forks. May couple DNA replication to sister chromatid cohesion through regulation of the acetylation of the cohesin subunit SMC3. This Mus musculus (Mouse) protein is Sister chromatid cohesion protein DCC1 (DSCC1).